Consider the following 144-residue polypeptide: MSTFMAKPHEVERKWYVIDAAGKTLGRVATEAARLLRGKHKPIFTPHVDTGDYVIIINAAKVRLTGNKLQKKQYIRHTGYPGGLRVMNYATLLRTFPERAVEKAVKGMIPHNSLGRKMVKKLKVYRGDSHPHAAQQPQVWEIKD.

The protein belongs to the universal ribosomal protein uL13 family. As to quaternary structure, part of the 50S ribosomal subunit.

In terms of biological role, this protein is one of the early assembly proteins of the 50S ribosomal subunit, although it is not seen to bind rRNA by itself. It is important during the early stages of 50S assembly. The chain is Large ribosomal subunit protein uL13 from Moorella thermoacetica (strain ATCC 39073 / JCM 9320).